A 909-amino-acid chain; its full sequence is Lon protease homolog 2, peroxisomal (909 aa).

The 230-residue stretch at 1-230 (MAPVRAPTAR…KVIELLDRQV (230 aa)) folds into the Lon N-terminal domain. Residues 249 to 269 (FPMDPDSTKPGKVKPPVKAPG) are disordered. Residue 463–470 (GPPGVGKT) coordinates ATP. Residues 706–893 (TSRPGIVTGL…WEAIRYVWPD (188 aa)) enclose the Lon proteolytic domain. Residues Ser799 and Lys842 contribute to the active site. Residues 907–909 (SRL) carry the Microbody targeting signal motif.

This sequence belongs to the peptidase S16 family.

It is found in the peroxisome matrix. It localises to the cytoplasm. The enzyme catalyses Hydrolysis of proteins in presence of ATP.. In terms of biological role, ATP-dependent serine protease that mediates the selective degradation of misfolded and unassembled polypeptides in the peroxisomal matrix. Necessary for type 2 peroxisome targeting signal (PTS2)-containing protein processing and facilitates peroxisome matrix protein import. This Sordaria macrospora (strain ATCC MYA-333 / DSM 997 / K(L3346) / K-hell) protein is Lon protease homolog 2, peroxisomal.